The following is a 561-amino-acid chain: Dihydroxy-acid dehydratase (561 aa).

Position 51 (Cys51) interacts with [2Fe-2S] cluster. A Mg(2+)-binding site is contributed by Asp83. Residue Cys124 coordinates [2Fe-2S] cluster. The Mg(2+) site is built by Asp125 and Lys126. Lys126 carries the N6-carboxylysine modification. Position 196 (Cys196) interacts with [2Fe-2S] cluster. Glu448 provides a ligand contact to Mg(2+). Ser474 acts as the Proton acceptor in catalysis.

The protein belongs to the IlvD/Edd family. As to quaternary structure, homodimer. [2Fe-2S] cluster is required as a cofactor. It depends on Mg(2+) as a cofactor.

It catalyses the reaction (2R)-2,3-dihydroxy-3-methylbutanoate = 3-methyl-2-oxobutanoate + H2O. The catalysed reaction is (2R,3R)-2,3-dihydroxy-3-methylpentanoate = (S)-3-methyl-2-oxopentanoate + H2O. It functions in the pathway amino-acid biosynthesis; L-isoleucine biosynthesis; L-isoleucine from 2-oxobutanoate: step 3/4. It participates in amino-acid biosynthesis; L-valine biosynthesis; L-valine from pyruvate: step 3/4. Its function is as follows. Functions in the biosynthesis of branched-chain amino acids. Catalyzes the dehydration of (2R,3R)-2,3-dihydroxy-3-methylpentanoate (2,3-dihydroxy-3-methylvalerate) into 2-oxo-3-methylpentanoate (2-oxo-3-methylvalerate) and of (2R)-2,3-dihydroxy-3-methylbutanoate (2,3-dihydroxyisovalerate) into 2-oxo-3-methylbutanoate (2-oxoisovalerate), the penultimate precursor to L-isoleucine and L-valine, respectively. The chain is Dihydroxy-acid dehydratase from Pyrobaculum neutrophilum (strain DSM 2338 / JCM 9278 / NBRC 100436 / V24Sta) (Thermoproteus neutrophilus).